Consider the following 422-residue polypeptide: UDP-N-acetylglucosamine 1-carboxyvinyltransferase (422 aa).

22–23 is a phosphoenolpyruvate binding site; it reads KN. Residue R94 participates in UDP-N-acetyl-alpha-D-glucosamine binding. C118 (proton donor) is an active-site residue. C118 carries the post-translational modification 2-(S-cysteinyl)pyruvic acid O-phosphothioketal. UDP-N-acetyl-alpha-D-glucosamine contacts are provided by residues 123–127, D309, and I331; that span reads RPVDL.

The protein belongs to the EPSP synthase family. MurA subfamily.

It localises to the cytoplasm. The catalysed reaction is phosphoenolpyruvate + UDP-N-acetyl-alpha-D-glucosamine = UDP-N-acetyl-3-O-(1-carboxyvinyl)-alpha-D-glucosamine + phosphate. Its pathway is cell wall biogenesis; peptidoglycan biosynthesis. Functionally, cell wall formation. Adds enolpyruvyl to UDP-N-acetylglucosamine. In Cereibacter sphaeroides (strain KD131 / KCTC 12085) (Rhodobacter sphaeroides), this protein is UDP-N-acetylglucosamine 1-carboxyvinyltransferase.